An 84-amino-acid chain; its full sequence is MSILSFLLGEKKKSASVAKERLQIILAHERSGHSAPADYLPALQRELVAVISKYVKISDQDLRVSLERQDNLEVLEVKIEIPQA.

Belongs to the MinE family.

In terms of biological role, prevents the cell division inhibition by proteins MinC and MinD at internal division sites while permitting inhibition at polar sites. This ensures cell division at the proper site by restricting the formation of a division septum at the midpoint of the long axis of the cell. The chain is Cell division topological specificity factor from Cupriavidus metallidurans (strain ATCC 43123 / DSM 2839 / NBRC 102507 / CH34) (Ralstonia metallidurans).